We begin with the raw amino-acid sequence, 127 residues long: Holo-[acyl-carrier-protein] synthase (127 aa).

Residues Asp9 and Glu58 each coordinate Mg(2+).

Belongs to the P-Pant transferase superfamily. AcpS family. Mg(2+) is required as a cofactor.

It is found in the cytoplasm. The enzyme catalyses apo-[ACP] + CoA = holo-[ACP] + adenosine 3',5'-bisphosphate + H(+). Transfers the 4'-phosphopantetheine moiety from coenzyme A to a Ser of acyl-carrier-protein. The chain is Holo-[acyl-carrier-protein] synthase from Shewanella putrefaciens (strain CN-32 / ATCC BAA-453).